The primary structure comprises 412 residues: Methylmalonic aciduria type A homolog, mitochondrial (412 aa).

A mitochondrion-targeting transit peptide spans 1-15; sequence MVVRALVRAHPLSRI. Residues 132–140, Asp275, and 311–313 contribute to the GTP site; these read GSPGVGKSS and SIM.

Belongs to the SIMIBI class G3E GTPase family. ArgK/MeaB subfamily.

It is found in the mitochondrion. May have GTPase activity. May also bind and hydrolyze ATP. May function as chaperone. Likely to have a role in propionyl-CoA metabolism and adenosylcobalamin synthesis. This chain is Methylmalonic aciduria type A homolog, mitochondrial, found in Caenorhabditis briggsae.